The chain runs to 195 residues: Oocyte-secreted protein 3 (195 aa).

An N-terminal signal peptide occupies residues 1 to 21; that stretch reads MKAFVASGLLLLIFGMWRCSG. N-linked (GlcNAc...) asparagine glycosylation is present at asparagine 102.

It belongs to the PLAC1 family. In terms of tissue distribution, oocyte-specific.

It localises to the secreted. This Mus musculus (Mouse) protein is Oocyte-secreted protein 3.